The chain runs to 629 residues: uncharacterized protein (629 aa).

Residue histidine 562 is the Proton acceptor of the active site.

Belongs to the GMC oxidoreductase family. Requires FAD as cofactor.

This is an uncharacterized protein from Mycobacterium tuberculosis (strain CDC 1551 / Oshkosh).